Here is a 296-residue protein sequence, read N- to C-terminus: Polyamine aminopropyltransferase (296 aa).

Residues 16–251 enclose the PABS domain; sequence HLWYFEYYTG…GMWSYTFASK (236 aa). Glutamine 46 contacts S-methyl-5'-thioadenosine. Spermidine is bound by residues histidine 77 and aspartate 101. S-methyl-5'-thioadenosine is bound by residues glutamate 121 and 152–153; that span reads NG. The active-site Proton acceptor is aspartate 170. Position 170–173 (170–173) interacts with spermidine; the sequence is DSTD.

This sequence belongs to the spermidine/spermine synthase family. In terms of assembly, homodimer or homotetramer.

The protein resides in the cytoplasm. The enzyme catalyses S-adenosyl 3-(methylsulfanyl)propylamine + putrescine = S-methyl-5'-thioadenosine + spermidine + H(+). It functions in the pathway amine and polyamine biosynthesis; spermidine biosynthesis; spermidine from putrescine: step 1/1. Functionally, catalyzes the irreversible transfer of a propylamine group from the amino donor S-adenosylmethioninamine (decarboxy-AdoMet) to putrescine (1,4-diaminobutane) to yield spermidine. The chain is Polyamine aminopropyltransferase from Thermotoga petrophila (strain ATCC BAA-488 / DSM 13995 / JCM 10881 / RKU-1).